The sequence spans 376 residues: Rhodopsin (376 aa).

The Extracellular segment spans residues 1-51; that stretch reads MSLINEPSYSAYSWGGQGGYGNQTVVDKVLPEMLHLIDPHWYQFPPMNPLW. A glycan (N-linked (GlcNAc...) asparagine) is linked at N22. A helical membrane pass occupies residues 52–76; sequence HGLLGFVIGCLGFVSVVGNGMVIYI. The Cytoplasmic segment spans residues 77–88; that stretch reads FSTTKGLRTPSN. A helical transmembrane segment spans residues 89–113; sequence LLVVNLAFSDFLMMLSMSPPMVINC. The Extracellular portion of the chain corresponds to 114-128; it reads YYETWVLGPFMCELY. C125 and C202 are oxidised to a cystine. The helical transmembrane segment at 129–148 threads the bilayer; it reads ALLGSLFGCGSIWTMVMIAL. Over 149 to 167 the chain is Cytoplasmic; the sequence is DRYNVIVKGLAAKPMTNKT. The helical transmembrane segment at 168–191 threads the bilayer; sequence AMLRILGIWAMSIAWTVFPLFGWN. The Extracellular portion of the chain corresponds to 192 to 215; it reads RYVPEGNMTACGTDYLNKEWVSRS. N-linked (GlcNAc...) asparagine glycosylation occurs at N198. A helical membrane pass occupies residues 216 to 243; the sequence is YILVYSVFVYFLPLATIIYSYWFIVQAV. At 244–278 the chain is on the cytoplasmic side; it reads SAHEKQMREQAKKMNVASLRSAENANTSAECKLAK. A helical membrane pass occupies residues 279–302; it reads VALMTISLWFFAWTPYLVTDFSGI. At 303–309 the chain is on the extracellular side; sequence FEWGKIS. A helical membrane pass occupies residues 310 to 334; sequence PLATIWCSLFAKANAVYNPIVYGIS. Position 321 is an N6-(retinylidene)lysine (K321). The Cytoplasmic portion of the chain corresponds to 335 to 376; that stretch reads HPKYRAALNKKFPSLACASEPDDTASQASGATTVSDEKSASA. The disordered stretch occupies residues 353 to 376; that stretch reads SEPDDTASQASGATTVSDEKSASA. Polar residues predominate over residues 358-368; that stretch reads TASQASGATTV.

The protein belongs to the G-protein coupled receptor 1 family. Opsin subfamily. Post-translationally, phosphorylated on some or all of the serine and threonine residues present in the C-terminal region.

The protein resides in the membrane. In terms of biological role, visual pigments are the light-absorbing molecules that mediate vision. They consist of an apoprotein, opsin, covalently linked to cis-retinal. In Sphodromantis sp. (Mantis), this protein is Rhodopsin.